A 246-amino-acid chain; its full sequence is Putative F-box/LRR-repeat protein 9 (246 aa).

The region spanning 18 to 65 (YRNWAELPPELTSSILLRLGAIEILQNAQRVCKSWRRVCQDPSMWRKI) is the F-box domain.

The protein is Putative F-box/LRR-repeat protein 9 (FBL9) of Arabidopsis thaliana (Mouse-ear cress).